A 480-amino-acid chain; its full sequence is UDP-N-acetylmuramate--L-alanine ligase (480 aa).

129 to 135 (GTHGKTT) is an ATP binding site.

The protein belongs to the MurCDEF family.

The protein resides in the cytoplasm. The catalysed reaction is UDP-N-acetyl-alpha-D-muramate + L-alanine + ATP = UDP-N-acetyl-alpha-D-muramoyl-L-alanine + ADP + phosphate + H(+). It participates in cell wall biogenesis; peptidoglycan biosynthesis. In terms of biological role, cell wall formation. This is UDP-N-acetylmuramate--L-alanine ligase from Mannheimia succiniciproducens (strain KCTC 0769BP / MBEL55E).